Reading from the N-terminus, the 331-residue chain is Lipoyl synthase (331 aa).

Residues 1 to 20 (MTTETNPAVTPAYNPSEKQK) are disordered. 7 residues coordinate [4Fe-4S] cluster: C71, C76, C82, C97, C101, C104, and S311. Residues 82–300 (CFGKGTATFM…EEEAYKMGFA (219 aa)) enclose the Radical SAM core domain.

This sequence belongs to the radical SAM superfamily. Lipoyl synthase family. [4Fe-4S] cluster serves as cofactor.

Its subcellular location is the cytoplasm. The enzyme catalyses [[Fe-S] cluster scaffold protein carrying a second [4Fe-4S](2+) cluster] + N(6)-octanoyl-L-lysyl-[protein] + 2 oxidized [2Fe-2S]-[ferredoxin] + 2 S-adenosyl-L-methionine + 4 H(+) = [[Fe-S] cluster scaffold protein] + N(6)-[(R)-dihydrolipoyl]-L-lysyl-[protein] + 4 Fe(3+) + 2 hydrogen sulfide + 2 5'-deoxyadenosine + 2 L-methionine + 2 reduced [2Fe-2S]-[ferredoxin]. It functions in the pathway protein modification; protein lipoylation via endogenous pathway; protein N(6)-(lipoyl)lysine from octanoyl-[acyl-carrier-protein]: step 2/2. Its function is as follows. Catalyzes the radical-mediated insertion of two sulfur atoms into the C-6 and C-8 positions of the octanoyl moiety bound to the lipoyl domains of lipoate-dependent enzymes, thereby converting the octanoylated domains into lipoylated derivatives. In Janthinobacterium sp. (strain Marseille) (Minibacterium massiliensis), this protein is Lipoyl synthase.